The chain runs to 454 residues: UPF0210 protein Mhun_2657 (454 aa).

This sequence belongs to the UPF0210 family.

This chain is UPF0210 protein Mhun_2657, found in Methanospirillum hungatei JF-1 (strain ATCC 27890 / DSM 864 / NBRC 100397 / JF-1).